A 423-amino-acid chain; its full sequence is Glutamate-1-semialdehyde 2,1-aminomutase (423 aa).

N6-(pyridoxal phosphate)lysine is present on K266.

This sequence belongs to the class-III pyridoxal-phosphate-dependent aminotransferase family. HemL subfamily. In terms of assembly, homodimer. Pyridoxal 5'-phosphate serves as cofactor.

It localises to the cytoplasm. The enzyme catalyses (S)-4-amino-5-oxopentanoate = 5-aminolevulinate. The protein operates within porphyrin-containing compound metabolism; protoporphyrin-IX biosynthesis; 5-aminolevulinate from L-glutamyl-tRNA(Glu): step 2/2. This chain is Glutamate-1-semialdehyde 2,1-aminomutase, found in Nitratidesulfovibrio vulgaris (strain DP4) (Desulfovibrio vulgaris).